The sequence spans 383 residues: ATP phosphoribosyltransferase regulatory subunit (383 aa).

It belongs to the class-II aminoacyl-tRNA synthetase family. HisZ subfamily. In terms of assembly, heteromultimer composed of HisG and HisZ subunits.

It localises to the cytoplasm. The protein operates within amino-acid biosynthesis; L-histidine biosynthesis; L-histidine from 5-phospho-alpha-D-ribose 1-diphosphate: step 1/9. Required for the first step of histidine biosynthesis. May allow the feedback regulation of ATP phosphoribosyltransferase activity by histidine. The sequence is that of ATP phosphoribosyltransferase regulatory subunit from Lactiplantibacillus plantarum (strain ATCC BAA-793 / NCIMB 8826 / WCFS1) (Lactobacillus plantarum).